Reading from the N-terminus, the 599-residue chain is MEKNRNYFIAIALSVVIVLAWQFLYMNPRIEQQRRAEEARQAQQQTTQQQPAPGAAPGATVEGAPPASSTQAAATATREEAIARTQRVAIDTNAIAGSINLTGARFDDIRLKGYHETVDDSSPIITLFSPADTKDGYFTELGYVAAQEVGGVPGPTTVWTLASGDKLTETTPVTLTYTNSKGVVFSRTVSIDEHYMLSIADKVENPGQAAISFATYGRVTRNNKPVIPPVFVIHEGFLGVSGKDGSLTEKKYKDVEEEPVTVAKATGGWLGITDKYWAAAIVPPQTTPFETRYSHITGNQPSYQADFKSDSMTVEAGQSIELKSLVFAGAKEVPLVDRYETEYSVPKFDLLIDWGWFYFITKPMFKMMDFFFRYFGNFGVAILLTTIVVKALFFPLASKQYASMANMKRMQPKMEELKAKHGDDRMAMQQAMMQLYKEEKINPVAGCWPMLLQIPVFFALYKVIYVTIEMRHAPFFGWIHDLSAPDPTSLFNLFGLLPYDVPHFLMIGVWPLVMGITMFLQMRMNPTPPDPTQAMIFTWMPLIFTFMLASFPAGLVIYWAWNNTLSISQQALIMKRHGAKIELFDNIKGLFKRKPVQSK.

Residues 6–26 (NYFIAIALSVVIVLAWQFLYM) traverse the membrane as a helical segment. A disordered region spans residues 35 to 78 (RAEEARQAQQQTTQQQPAPGAAPGATVEGAPPASSTQAAATATR). Residues 41 to 76 (QAQQQTTQQQPAPGAAPGATVEGAPPASSTQAAATA) are compositionally biased toward low complexity. The next 4 helical transmembrane spans lie at 378 to 398 (FGVA…PLAS), 448 to 468 (WPML…YVTI), 501 to 521 (VPHF…MFLQ), and 536 to 556 (IFTW…AGLV).

This sequence belongs to the OXA1/ALB3/YidC family. Type 1 subfamily. As to quaternary structure, interacts with the Sec translocase complex via SecD. Specifically interacts with transmembrane segments of nascent integral membrane proteins during membrane integration.

It localises to the cell inner membrane. Required for the insertion and/or proper folding and/or complex formation of integral membrane proteins into the membrane. Involved in integration of membrane proteins that insert both dependently and independently of the Sec translocase complex, as well as at least some lipoproteins. Aids folding of multispanning membrane proteins. The chain is Membrane protein insertase YidC from Agrobacterium fabrum (strain C58 / ATCC 33970) (Agrobacterium tumefaciens (strain C58)).